Reading from the N-terminus, the 290-residue chain is LLDPRVKVLAVSDPFIDLQYMVYMFKYDSVHGRFKGTVEIKDGKLVIDGHPITVFQERDPANIQWGSVGADYVVESSGVFTTVDKASAHLKGGAKKVIISAPSADAPMFVVGVNLDAYDSKYTVISNASCTTNCLAPLAKVINDKFGIVEGLMSTIHATTATQKTVDGPSNKDWRGGRAVNGNIIPSSTGAAKAVGKVIPALNGKLTGLAFRVPTNDVSVVDLVVRLEKEATYDEIKLAVKEAADGPLKGIIEYTDDLVVSTDFIGSTASSIFDAGAGIQLNKNFAKLIS.

NAD(+)-binding residues include D13 and R58. D-glyceraldehyde 3-phosphate-binding positions include 129–131 (SCT), T160, 189–190 (TG), and R212. C130 acts as the Nucleophile in catalysis.

It belongs to the glyceraldehyde-3-phosphate dehydrogenase family. Homotetramer.

The protein localises to the cytoplasm. The enzyme catalyses D-glyceraldehyde 3-phosphate + phosphate + NAD(+) = (2R)-3-phospho-glyceroyl phosphate + NADH + H(+). The protein operates within carbohydrate degradation; glycolysis; pyruvate from D-glyceraldehyde 3-phosphate: step 1/5. This Lactarius deterrimus (False saffron milkcap) protein is Glyceraldehyde-3-phosphate dehydrogenase (GPD).